The following is a 410-amino-acid chain: MFVRALSLRDFRSWDALGLNLRPGCTVFVGPNGHGKTNVLEALGYLSTLSSHRVSSDAPLIRTGTAQAFAGATVVNTGRELTVDLELNEGKSNRARINQSPTRRPREILGILQTVLFAPEDLSLVRGDPGDRRRYLDELLTSRIPRMAAVRADYERVLRQRSALLKTAGGALRRSSRGGGRPSEDGASALATLEVWDGHLAAHGAQLLAGRLHLVHDLAPHLAESYQSLAPESRPASIRYRSSLGSSLPPEFTAPARAPEAGDIAFLEERFLQELSVMRSKEIERGVCLVGPHRDDLELHLGDTPAKGFASHGESWSFALSLRLAGFALLRADGSDPVLMLDDVFAELDRKRRRALAKVALDAEQVLITAAVPEDVPEELDAVRFGVEARDTDRGRISHILEETEDRRDG.

Residue 30 to 37 (GPNGHGKT) participates in ATP binding.

Belongs to the RecF family.

The protein resides in the cytoplasm. Its function is as follows. The RecF protein is involved in DNA metabolism; it is required for DNA replication and normal SOS inducibility. RecF binds preferentially to single-stranded, linear DNA. It also seems to bind ATP. This chain is DNA replication and repair protein RecF, found in Rhodococcus opacus (strain B4).